Reading from the N-terminus, the 627-residue chain is (R)-linalool synthase 1, chloroplastic (627 aa).

Residues 1 to 21 (MAFVSIAPLASRCCVHKSFVS) constitute a chloroplast transit peptide. Residues aspartate 378, aspartate 382, and glutamate 530 each contribute to the Mg(2+) site. The DDXXD motif motif lies at 378 to 382 (DDIYD).

It belongs to the terpene synthase family. Tpsd subfamily. It depends on Mg(2+) as a cofactor. Mn(2+) is required as a cofactor.

The protein resides in the plastid. It localises to the chloroplast. It carries out the reaction (2E)-geranyl diphosphate + H2O = (R)-linalool + diphosphate. The protein operates within terpene metabolism; oleoresin biosynthesis. Terpene synthase (TPS) involved in the biosynthesis of monoterpene natural products included in conifer oleoresin secretions and volatile emissions; these compounds contribute to biotic and abiotic stress defense against herbivores and pathogens. Catalyzes the conversion of (2E)-geranyl diphosphate (GPP) to (R)-linalool. This chain is (R)-linalool synthase 1, chloroplastic, found in Picea sitchensis (Sitka spruce).